Reading from the N-terminus, the 365-residue chain is Phosphatidylcholine:ceramide cholinephosphotransferase 2 (365 aa).

The segment covering 1-14 (MDIIETAKLEEHLE) has biased composition (basic and acidic residues). The interval 1–52 (MDIIETAKLEEHLENQPSDPTNTYTRPTEPVEEENKNGNGKPKSLSSGLRKG) is disordered. Polar residues predominate over residues 15–26 (NQPSDPTNTYTR). Transmembrane regions (helical) follow at residues 80-100 (GIAF…ITVV), 128-148 (FSVS…QWLF), 159-179 (FCFI…VTTL), 218-240 (HILC…YLFI), and 248-268 (FWWY…CILV). His229 is an active-site residue. Active-site residues include His272 and Asp276. Residues 273-290 (YTVDVIIAYYITTRLFWW) form a helical membrane-spanning segment. Over 291-365 (YHSMANEKNL…KIGEDNEKST (75 aa)) the chain is Cytoplasmic. S-palmitoyl cysteine attachment occurs at residues Cys331, Cys332, Cys343, and Cys348.

Belongs to the sphingomyelin synthase family. In terms of processing, palmitoylated on Cys-331, Cys-332, Cys-343 and Cys-348; which plays an important role in plasma membrane localization.

It localises to the cell membrane. The protein localises to the golgi apparatus membrane. The enzyme catalyses an N-acylsphing-4-enine + a 1,2-diacyl-sn-glycero-3-phosphocholine = a sphingomyelin + a 1,2-diacyl-sn-glycerol. The catalysed reaction is an N-acylsphinganine + a 1,2-diacyl-sn-glycero-3-phosphocholine = an N-acylsphinganine-1-phosphocholine + a 1,2-diacyl-sn-glycerol. It carries out the reaction an N-acyl-(4R)-4-hydroxysphinganine + a 1,2-diacyl-sn-glycero-3-phosphocholine = an N-acyl-(4R)-4-hydroxysphinganine-phosphocholine + a 1,2-diacyl-sn-glycerol. It catalyses the reaction an N-acylsphing-4-enine + a 1,2-diacyl-sn-glycero-3-phosphoethanolamine = an N-acylsphing-4-enine 1-phosphoethanolamine + a 1,2-diacyl-sn-glycerol. The enzyme catalyses an N-acylsphinganine + a 1,2-diacyl-sn-glycero-3-phosphoethanolamine = an N-acylsphinganine-1-phosphoethanolamine + a 1,2-diacyl-sn-glycerol. The catalysed reaction is an N-acyl-(4R)-4-hydroxysphinganine + a 1,2-diacyl-sn-glycero-3-phosphoethanolamine = an N-acyl-(4R)-4-hydroxysphinganine-1-phosphoethanolamine + a 1,2-diacyl-sn-glycerol. It carries out the reaction 1,2-dihexadecanoyl-sn-glycero-3-phosphocholine + an N-acylsphing-4-enine = 1,2-dihexadecanoyl-sn-glycerol + a sphingomyelin. It catalyses the reaction 1-(9Z-octadecenoyl)-2-acyl-sn-3-glycerol + a sphingomyelin = a 1-(9Z-octadecenoyl)-2-acyl-sn-glycero-3-phosphocholine + an N-acylsphing-4-enine. The enzyme catalyses N-hexadecanoylsphinganine + a 1,2-diacyl-sn-glycero-3-phosphocholine = N-hexadecanoyl-sphinganine-1-phosphocholine + a 1,2-diacyl-sn-glycerol. The catalysed reaction is N-hexadecanoyl-(4R)-hydroxysphinganine + a 1,2-diacyl-sn-glycero-3-phosphocholine = N-hexadecanoyl-(4R)-hydroxysphinganine-phosphocholine + a 1,2-diacyl-sn-glycerol. It carries out the reaction N-hexadecanoylsphinganine + a 1,2-diacyl-sn-glycero-3-phosphoethanolamine = N-hexadecanoyl-sphinganine-1-phosphoethanolamine + a 1,2-diacyl-sn-glycerol. It catalyses the reaction N-hexadecanoyl-(4R)-hydroxysphinganine + a 1,2-diacyl-sn-glycero-3-phosphoethanolamine = N-hexadecanoyl-(4R)-hydroxysphinganine-1-phosphoethanolamine + a 1,2-diacyl-sn-glycerol. The protein operates within sphingolipid metabolism. Sphingomyelin synthase that primarily contributes to sphingomyelin synthesis and homeostasis at the plasma membrane. Catalyzes the reversible transfer of phosphocholine moiety in sphingomyelin biosynthesis: in the forward reaction transfers phosphocholine head group of phosphatidylcholine (PC) on to ceramide (CER) to form ceramide phosphocholine (sphingomyelin, SM) and diacylglycerol (DAG) as by-product, and in the reverse reaction transfers phosphocholine from SM to DAG to form PC and CER. The direction of the reaction appears to depend on the levels of CER and DAG in the plasma membrane. Does not use free phosphorylcholine or CDP-choline as donors. Can also transfer phosphoethanolamine head group of phosphatidylethanolamine (PE) on to ceramide (CER) to form ceramide phosphoethanolamine (CPE). Regulates receptor-mediated signal transduction via mitogenic DAG and proapoptotic CER, as well as via SM, a structural component of membrane rafts that serve as platforms for signal transduction and protein sorting. To a lesser extent, plays a role in secretory transport via regulation of DAG pool at the Golgi apparatus and its downstream effects on PRKD1. Required for normal bone matrix mineralization. The protein is Phosphatidylcholine:ceramide cholinephosphotransferase 2 (SGMS2) of Macaca fascicularis (Crab-eating macaque).